We begin with the raw amino-acid sequence, 578 residues long: Penicillin-binding protein activator LpoA (578 aa).

The signal sequence occupies residues 1–30; it reads MPTILVQSYGFRQKMKTIFIPTALALLLAA. A lipid anchor (N-palmitoyl cysteine) is attached at Cys-31. Cys-31 carries S-diacylglycerol cysteine lipidation.

The protein belongs to the LpoA family. As to quaternary structure, interacts with PBP1a.

Its subcellular location is the cell outer membrane. Functionally, regulator of peptidoglycan synthesis that is essential for the function of penicillin-binding protein 1A (PBP1a). The polypeptide is Penicillin-binding protein activator LpoA (Glaesserella parasuis serovar 5 (strain SH0165) (Haemophilus parasuis)).